Consider the following 79-residue polypeptide: Cell division protein ZapB (79 aa).

Positions 4 to 78 form a coiled coil; it reads EVFEKLEAKV…LRALLGKMEE (75 aa).

The protein belongs to the ZapB family. As to quaternary structure, homodimer. The ends of the coiled-coil dimer bind to each other, forming polymers. Interacts with FtsZ.

The protein localises to the cytoplasm. Functionally, non-essential, abundant cell division factor that is required for proper Z-ring formation. It is recruited early to the divisome by direct interaction with FtsZ, stimulating Z-ring assembly and thereby promoting cell division earlier in the cell cycle. Its recruitment to the Z-ring requires functional FtsA or ZipA. The polypeptide is Cell division protein ZapB (Erwinia tasmaniensis (strain DSM 17950 / CFBP 7177 / CIP 109463 / NCPPB 4357 / Et1/99)).